Reading from the N-terminus, the 452-residue chain is Mitochondrial import inner membrane translocase subunit TIM44 (452 aa).

Position 128 is a phosphothreonine (T128). 166-173 lines the ATP pocket; that stretch reads GGEKLGRT. Phosphoserine is present on S180. Position 217 is an N6-succinyllysine (K217).

This sequence belongs to the Tim44 family. In terms of assembly, probable component of the PAM complex at least composed of a mitochondrial HSP70 protein, GRPEL1 or GRPEL2, TIMM44, TIMM16/PAM16 and TIMM14/DNAJC19. The complex interacts with the TIMM23 component of the TIM23 complex. Interacts with SLC25A4/ANT1 and SLC25A5/ANT2; leading to inhibit the presequence translocase TIMM23, thereby promoting stabilization of PINK1.

The protein localises to the mitochondrion inner membrane. The protein resides in the mitochondrion matrix. Essential component of the PAM complex, a complex required for the translocation of transit peptide-containing proteins from the inner membrane into the mitochondrial matrix in an ATP-dependent manner. Recruits mitochondrial HSP70 to drive protein translocation into the matrix using ATP as an energy source. The chain is Mitochondrial import inner membrane translocase subunit TIM44 (TIMM44) from Homo sapiens (Human).